The following is an 89-amino-acid chain: Large ribosomal subunit protein bL31B (89 aa).

The tract at residues 70 to 89 (RVQRFESRRRRRQQQSGEQG) is disordered.

It belongs to the bacterial ribosomal protein bL31 family. Type B subfamily. As to quaternary structure, part of the 50S ribosomal subunit.

In Rubrobacter xylanophilus (strain DSM 9941 / JCM 11954 / NBRC 16129 / PRD-1), this protein is Large ribosomal subunit protein bL31B.